The primary structure comprises 3112 residues: Genome polyprotein (3112 aa).

Residues 234–383 (KLTQRRANKI…PDCLEGLTYY (150 aa)) form the Peptidase S30 domain. Residues histidine 286, aspartate 301, and serine 333 each act as for P1 proteinase activity in the active site. The region spanning 729-850 (TLVPKSGFCY…IETFKDYRIG (122 aa)) is the Peptidase C6 domain. Catalysis depends on for helper component proteinase activity residues cysteine 737 and histidine 809. Residues 1278–1429 (NIATGAGNEF…CVPTNHKVDV (152 aa)) enclose the Helicase ATP-binding domain. 1291 to 1298 (GDVGSGKS) serves as a coordination point for ATP. A DECH box motif is present at residues 1379–1382 (DECH). In terms of domain architecture, Helicase C-terminal spans 1444–1627 (SIDSHAEGLR…EVNFVTREQV (184 aa)). A Peptidase C4 domain is found at 2096-2311 (DDNYVPHSRC…ISWKGVPTNM (216 aa)). Active-site for nuclear inclusion protein A activity residues include histidine 2140, aspartate 2174, and cysteine 2243. The 119-residue stretch at 2569-2687 (WKFIDADGSR…NAPQGVCETI (119 aa)) folds into the RdRp catalytic domain. Positions 2818-2867 (HSGADQSGVVKDQTGDKAEGSGTKTEDPPNQTTDPVNNPSNGGNKDAPQN) are disordered. Residues 2830–2844 (QTGDKAEGSGTKTED) show a composition bias toward basic and acidic residues. Residues 2845-2867 (PPNQTTDPVNNPSNGGNKDAPQN) show a composition bias toward polar residues.

The protein belongs to the potyviridae genome polyprotein family. VPg is uridylylated by the polymerase and is covalently attached to the 5'-end of the genomic RNA. This uridylylated form acts as a nucleotide-peptide primer for the polymerase. Post-translationally, genome polyprotein of potyviruses undergoes post-translational proteolytic processing by the main proteinase NIa-pro resulting in the production of at least ten individual proteins. The P1 proteinase and the HC-pro cleave only their respective C-termini autocatalytically. 6K1 is essential for proper proteolytic separation of P3 from CI.

Its subcellular location is the host cytoplasmic vesicle. The protein resides in the virion. It carries out the reaction RNA(n) + a ribonucleoside 5'-triphosphate = RNA(n+1) + diphosphate. The catalysed reaction is Hydrolyzes glutaminyl bonds, and activity is further restricted by preferences for the amino acids in P6 - P1' that vary with the species of potyvirus, e.g. Glu-Xaa-Xaa-Tyr-Xaa-Gln-|-(Ser or Gly) for the enzyme from tobacco etch virus. The natural substrate is the viral polyprotein, but other proteins and oligopeptides containing the appropriate consensus sequence are also cleaved.. It catalyses the reaction Hydrolyzes a Gly-|-Gly bond at its own C-terminus, commonly in the sequence -Tyr-Xaa-Val-Gly-|-Gly, in the processing of the potyviral polyprotein.. Required for aphid transmission and also has proteolytic activity. Only cleaves a Gly-Gly dipeptide at its own C-terminus. Interacts with virions and aphid stylets. Acts as a suppressor of RNA-mediated gene silencing, also known as post-transcriptional gene silencing (PTGS), a mechanism of plant viral defense that limits the accumulation of viral RNAs. May have RNA-binding activity. Its function is as follows. Has helicase activity. It may be involved in replication. Functionally, indispensable for virus replication. In terms of biological role, mediates the cap-independent, EIF4E-dependent translation of viral genomic RNAs. Binds to the cap-binding site of host EIF4E and thus interferes with the host EIF4E-dependent mRNA export and translation. VPg-RNA directly binds EIF4E and is a template for transcription. Also forms trimeric complexes with EIF4E-EIF4G, which are templates for translation. Has RNA-binding and proteolytic activities. Its function is as follows. An RNA-dependent RNA polymerase that plays an essential role in the virus replication. Functionally, involved in aphid transmission, cell-to-cell and systemis movement, encapsidation of the viral RNA and in the regulation of viral RNA amplification. The sequence is that of Genome polyprotein from Triticum aestivum (Wheat).